The following is a 686-amino-acid chain: Potassium-transporting ATPase ATP-binding subunit (686 aa).

Transmembrane regions (helical) follow at residues 38 to 58 (VMFV…KDLV) and 64 to 84 (AAPL…VLFA). The tract at residues 101–123 (ALRKMRKETTARRWKDGREERVP) is disordered. The span at 107–123 (KETTARRWKDGREERVP) shows a compositional bias: basic and acidic residues. Helical transmembrane passes span 224–244 (ILLV…VPLA) and 257–277 (VALL…AIGI). Asp-308 serves as the catalytic 4-aspartylphosphate intermediate. ATP-binding positions include Asp-345, Glu-349, 378–385 (FTAQTRMS), and Lys-399. Mg(2+) contacts are provided by Asp-522 and Asp-526. 3 helical membrane-spanning segments follow: residues 592–612 (FAIL…LNVM), 620–640 (AVLS…PLAL), and 666–686 (VIVP…VGLA).

Belongs to the cation transport ATPase (P-type) (TC 3.A.3) family. Type IA subfamily. As to quaternary structure, the system is composed of three essential subunits: KdpA, KdpB and KdpC.

Its subcellular location is the cell membrane. The catalysed reaction is K(+)(out) + ATP + H2O = K(+)(in) + ADP + phosphate + H(+). Part of the high-affinity ATP-driven potassium transport (or Kdp) system, which catalyzes the hydrolysis of ATP coupled with the electrogenic transport of potassium into the cytoplasm. This subunit is responsible for energy coupling to the transport system and for the release of the potassium ions to the cytoplasm. This chain is Potassium-transporting ATPase ATP-binding subunit, found in Myxococcus xanthus.